The following is a 548-amino-acid chain: Chaperonin GroEL 1 (548 aa).

ATP-binding positions include 30 to 33 (TLGP), Lys51, 87 to 91 (DGTTT), Gly415, 479 to 481 (NAA), and Asp495.

This sequence belongs to the chaperonin (HSP60) family. Forms a cylinder of 14 subunits composed of two heptameric rings stacked back-to-back. Interacts with the co-chaperonin GroES.

Its subcellular location is the cytoplasm. The catalysed reaction is ATP + H2O + a folded polypeptide = ADP + phosphate + an unfolded polypeptide.. In terms of biological role, together with its co-chaperonin GroES, plays an essential role in assisting protein folding. The GroEL-GroES system forms a nano-cage that allows encapsulation of the non-native substrate proteins and provides a physical environment optimized to promote and accelerate protein folding. This chain is Chaperonin GroEL 1, found in Escherichia coli O1:K1 / APEC.